We begin with the raw amino-acid sequence, 362 residues long: NAD(P)H-quinone oxidoreductase subunit 1, chloroplastic (362 aa).

7 helical membrane passes run 26-48 (LIWI…VIVW), 97-119 (FSIG…PLGY), 126-148 (LSIG…LMAG), 163-185 (AAAQ…SLLS), 254-276 (LFYL…LYLG), 296-318 (IIGI…LFLF), and 338-360 (LGWK…FQLV).

The protein belongs to the complex I subunit 1 family. In terms of assembly, NDH is composed of at least 16 different subunits, 5 of which are encoded in the nucleus.

It is found in the plastid. The protein resides in the chloroplast thylakoid membrane. It carries out the reaction a plastoquinone + NADH + (n+1) H(+)(in) = a plastoquinol + NAD(+) + n H(+)(out). The enzyme catalyses a plastoquinone + NADPH + (n+1) H(+)(in) = a plastoquinol + NADP(+) + n H(+)(out). Functionally, NDH shuttles electrons from NAD(P)H:plastoquinone, via FMN and iron-sulfur (Fe-S) centers, to quinones in the photosynthetic chain and possibly in a chloroplast respiratory chain. The immediate electron acceptor for the enzyme in this species is believed to be plastoquinone. Couples the redox reaction to proton translocation, and thus conserves the redox energy in a proton gradient. The chain is NAD(P)H-quinone oxidoreductase subunit 1, chloroplastic (ndhA) from Zea mays (Maize).